A 71-amino-acid polypeptide reads, in one-letter code: Small ribosomal subunit protein bS21 (71 aa).

Basic residues predominate over residues 48 to 60; the sequence is KKAAAVKRYKKKL. Positions 48–71 are disordered; that stretch reads KKAAAVKRYKKKLQRESIRTTRMY. The span at 61-71 shows a compositional bias: basic and acidic residues; it reads QRESIRTTRMY.

This sequence belongs to the bacterial ribosomal protein bS21 family.

The protein is Small ribosomal subunit protein bS21 of Psychrobacter sp. (strain PRwf-1).